The chain runs to 496 residues: uncharacterized protein (496 aa).

Residues 118 to 129 (LDRPFIKPRREN) are compositionally biased toward basic and acidic residues. Residues 118 to 187 (LDRPFIKPRR…NPHQSNRNTS (70 aa)) are disordered. A compositionally biased stretch (polar residues) spans 151–187 (TSDSQYASPFENHSITNLPIGQKQPFNNPHQSNRNTS).

This is an uncharacterized protein from Acanthamoeba polyphaga mimivirus (APMV).